A 327-amino-acid polypeptide reads, in one-letter code: tRNA-modifying protein YgfZ (327 aa).

Folate contacts are provided by W27 and W189.

The protein belongs to the tRNA-modifying YgfZ family.

Its subcellular location is the cytoplasm. Functionally, folate-binding protein involved in regulating the level of ATP-DnaA and in the modification of some tRNAs. It is probably a key factor in regulatory networks that act via tRNA modification, such as initiation of chromosomal replication. The protein is tRNA-modifying protein YgfZ of Klebsiella pneumoniae (strain 342).